The following is a 233-amino-acid chain: Small ribosomal subunit protein uS2 (233 aa).

The protein belongs to the universal ribosomal protein uS2 family.

The polypeptide is Small ribosomal subunit protein uS2 (Clostridium botulinum (strain Alaska E43 / Type E3)).